The sequence spans 368 residues: Galactoside 2-alpha-L-fucosyltransferase SEC1 (368 aa).

The segment at 1-20 (MWDMRAVAPQRPAAGHPRAG) is disordered. Residues 1-31 (MWDMRAVAPQRPAAGHPRAGWPRKLKTAATR) lie on the Cytoplasmic side of the membrane. The helical transmembrane segment at 32–52 (FWATCPSSSTVCFLFVIFAVS) threads the bilayer. The Lumenal segment spans residues 53–368 (TVFHCHRRLA…NLGQARESHP (316 aa)).

The protein belongs to the glycosyltransferase 11 family. As to expression, kidney.

The protein localises to the golgi apparatus. It is found in the golgi stack membrane. It catalyses the reaction a ganglioside GM1 + GDP-beta-L-fucose = a ganglioside Fuc-GM1 + GDP + H(+). It participates in protein modification; protein glycosylation. Its function is as follows. Catalyzes the transfer of alpha 1,2-linked fucose to ganglioside GM1 and galacto-N-biose. This Bos taurus (Bovine) protein is Galactoside 2-alpha-L-fucosyltransferase SEC1.